The primary structure comprises 290 residues: Probable branched-chain-amino-acid aminotransferase (290 aa).

Lys-155 is subject to N6-(pyridoxal phosphate)lysine.

Belongs to the class-IV pyridoxal-phosphate-dependent aminotransferase family. Pyridoxal 5'-phosphate serves as cofactor.

The enzyme catalyses L-leucine + 2-oxoglutarate = 4-methyl-2-oxopentanoate + L-glutamate. It catalyses the reaction L-isoleucine + 2-oxoglutarate = (S)-3-methyl-2-oxopentanoate + L-glutamate. It carries out the reaction L-valine + 2-oxoglutarate = 3-methyl-2-oxobutanoate + L-glutamate. Its pathway is amino-acid biosynthesis; L-isoleucine biosynthesis; L-isoleucine from 2-oxobutanoate: step 4/4. It functions in the pathway amino-acid biosynthesis; L-leucine biosynthesis; L-leucine from 3-methyl-2-oxobutanoate: step 4/4. It participates in amino-acid biosynthesis; L-valine biosynthesis; L-valine from pyruvate: step 4/4. In terms of biological role, acts on leucine, isoleucine and valine. This Rickettsia conorii (strain ATCC VR-613 / Malish 7) protein is Probable branched-chain-amino-acid aminotransferase (ilvE).